The following is a 482-amino-acid chain: Mannan endo-1,4-beta-mannosidase (482 aa).

A signal peptide spans 1–21 (MARTLRYLLCGILALAAGSNA). The 119-residue stretch at 42-160 (TTYEAEDAIL…WYLVDSITLT (119 aa)) folds into the CBM6 domain. N-linked (GlcNAc...) asparagine glycosylation is found at N171 and N300. Residues 181–474 (ASARALYDYL…YTSDYVLTLD (294 aa)) form the GH26 domain. E332 serves as the catalytic Proton donor. E422 acts as the Nucleophile in catalysis.

This sequence belongs to the glycosyl hydrolase 26 family.

The protein localises to the secreted. With respect to regulation, the activity is completely impaired by Ag(+), partially inhibited by Zn(2+), and enhanced by Co(2+), Ni(2+) and Cu(2+) by 22.6, 14.5 and 20.8 %, respectively. Ca(2+), Na(+), Mg(2+), Mn(2+), urea and EDTA do not significantly affect the mannanase activity. Mannan endo-1,4-beta-mannosidase that exhibits high activity against konjac glucomannan and carob galactomannan, as well as a lower activity toward beta-mannan. Shows no activity against barley beta-glucan, birchwood xylan, and low viscosity carboxymethyl cellulose (CMC). Has the ability to hydrolyze manno-oligosaccharides such as M4 which is degraded slightly to M3 and M1, M5 which is mainly degraded to M4 and M1, and M6 which is mostly hydrolyzed to M4 and M2. Shows no activity toward M2 and M3 manno-oligosaccharides. This is Mannan endo-1,4-beta-mannosidase from Thermothelomyces thermophilus (strain ATCC 42464 / BCRC 31852 / DSM 1799) (Sporotrichum thermophile).